Here is a 305-residue protein sequence, read N- to C-terminus: UDP-3-O-acyl-N-acetylglucosamine deacetylase (305 aa).

The Zn(2+) site is built by histidine 79, histidine 238, and aspartate 242. Residue histidine 265 is the Proton donor of the active site.

Belongs to the LpxC family. It depends on Zn(2+) as a cofactor.

The enzyme catalyses a UDP-3-O-[(3R)-3-hydroxyacyl]-N-acetyl-alpha-D-glucosamine + H2O = a UDP-3-O-[(3R)-3-hydroxyacyl]-alpha-D-glucosamine + acetate. It participates in glycolipid biosynthesis; lipid IV(A) biosynthesis; lipid IV(A) from (3R)-3-hydroxytetradecanoyl-[acyl-carrier-protein] and UDP-N-acetyl-alpha-D-glucosamine: step 2/6. Functionally, catalyzes the hydrolysis of UDP-3-O-myristoyl-N-acetylglucosamine to form UDP-3-O-myristoylglucosamine and acetate, the committed step in lipid A biosynthesis. The polypeptide is UDP-3-O-acyl-N-acetylglucosamine deacetylase (Histophilus somni (strain 129Pt) (Haemophilus somnus)).